Consider the following 97-residue polypeptide: uncharacterized protein (97 aa).

This is an uncharacterized protein from Shigella flexneri.